A 359-amino-acid chain; its full sequence is Membrane-bound lytic murein transglycosylase C (359 aa).

The signal sequence occupies residues 1-16 (MKKYLALALIAPLLIS). Residue cysteine 17 is the site of N-palmitoyl cysteine attachment. Cysteine 17 carries S-diacylglycerol cysteine lipidation.

The protein belongs to the transglycosylase Slt family.

The protein localises to the cell outer membrane. The catalysed reaction is Exolytic cleavage of the (1-&gt;4)-beta-glycosidic linkage between N-acetylmuramic acid (MurNAc) and N-acetylglucosamine (GlcNAc) residues in peptidoglycan, from either the reducing or the non-reducing ends of the peptidoglycan chains, with concomitant formation of a 1,6-anhydrobond in the MurNAc residue.. In terms of biological role, murein-degrading enzyme. May play a role in recycling of muropeptides during cell elongation and/or cell division. This is Membrane-bound lytic murein transglycosylase C from Escherichia coli O127:H6 (strain E2348/69 / EPEC).